The following is a 572-amino-acid chain: MPRKMFSCDFETTTKLDDCRVWAYGYMEIGNLDNYKIGNSLDEFMQWVMEIQADLYFHNLKFDGAFIVNWLEHHGFKWSNEGLPNTYNTIISKMGQWYMIDICFGYKGKRKLHTVIYDSLKKLPFPVKKIAKDFQLPLLKGDIDYHAERPVGHEITPEEYEYIKNDIEIIARALDIQFKQGLDRMTAGSDSLKGFKDILSTKKFNKVFPKLSLPMDKEIRRAYRGGFTWLNDKYKEKEIGEGMVFDVNSLYPSQMYSRPLPYGAPIVFQGKYEKDEQYPLYIQRIRFEFELKEGYIPTIQIKKNPFFKGNEYLKNSGAEPVELYLTNVDLELIQEHYEMYNVEYIDGFKFREKTGLFKEFIDKWTYVKTHEKGAKKQLAKLMFDSLYGKFASNPDVTGKVPYLKEDGSLGFRVGDEEYKDPVYTPMGVFITAWARFTTITAAQACYDRIIYCDTDSIHLTGTEVPEIIKDIVDPKKLGYWAHESTFKRAKYLRQKTYIQDIYAKEVDGKLIECSPDEATTTKFSVKCAGMTDTIKKKVTFDNFRVGFSSTGKPKPVQVNGGVVLVDSVFTIK.

The segment at 1–222 (MPRKMFSCDF…LPMDKEIRRA (222 aa)) is 3'-5' exonuclease and strand displacement activities. The interval 56-66 (YFHNLKFDGAF) is interaction with the primer terminal protein. Asp142 and Asp166 together coordinate Mg(2+). The segment at 223–226 (YRGG) is DNA-binding; Involved in the formation of a stable complex between TP and phi29 DNA polymerase. The initiation, polymerization and pyrophosphorolytic activities stretch occupies residues 227–572 (FTWLNDKYKE…VLVDSVFTIK (346 aa)). Residues Asp246 and Val247 each contribute to the Mg(2+) site. 5-methyl-UTP contacts are provided by Tyr251, Lys368, and Lys380. Residues Asp453 and Asp455 each contribute to the Mg(2+) site. Asp455 lines the 5-methyl-UTP pocket.

Belongs to the DNA polymerase type-B family. In terms of assembly, interacts with the primer terminal protein; this interaction allows the initiation of TP-primed DNA replication at both viral DNA ends. Interacts with DNA. Mg(2+) serves as cofactor.

The catalysed reaction is DNA(n) + a 2'-deoxyribonucleoside 5'-triphosphate = DNA(n+1) + diphosphate. In terms of biological role, polymerase responsible for protein-primed viral DNA replication by strand displacement with high processivity and fidelity. To start replication, the DNA polymerase forms a heterodimer with a free primer terminal protein (TP), recognizes the replication origins at both 5' ends of the linear chromosome, and initiates replication using as primer the OH-group of Ser-232 of the TP. This polymerase possesses three enzymatic activities: DNA synthesis (polymerase), primer terminal protein (TP) deoxynucleotidylation, which is the formation of a covalent linkage (phosphoester) between the hydroxyl group of a specific serine residue in TP and 5'-dAMP, a reaction directed by the second T at the 3' end, and 3' to 5' exonuclease activity. Exonuclease activity has a proofreading purpose. This Bacillus phage B103 (Bacteriophage B103) protein is DNA polymerase (2).